Here is a 689-residue protein sequence, read N- to C-terminus: Elongation factor G 1 (689 aa).

Residues 7–282 (DQVRTIGIIS…AVVDFLPSPL (276 aa)) enclose the tr-type G domain. GTP contacts are provided by residues 16–23 (SHIDAGKT), 80–84 (DTPGH), and 134–137 (NKMD).

This sequence belongs to the TRAFAC class translation factor GTPase superfamily. Classic translation factor GTPase family. EF-G/EF-2 subfamily.

The protein localises to the cytoplasm. Its function is as follows. Catalyzes the GTP-dependent ribosomal translocation step during translation elongation. During this step, the ribosome changes from the pre-translocational (PRE) to the post-translocational (POST) state as the newly formed A-site-bound peptidyl-tRNA and P-site-bound deacylated tRNA move to the P and E sites, respectively. Catalyzes the coordinated movement of the two tRNA molecules, the mRNA and conformational changes in the ribosome. This Geobacter sulfurreducens (strain ATCC 51573 / DSM 12127 / PCA) protein is Elongation factor G 1.